Here is a 521-residue protein sequence, read N- to C-terminus: Aldehyde dehydrogenase, mitochondrial (521 aa).

The transit peptide at 1–21 (MLRPAALAAARLVLRQGRRLL) directs the protein to the mitochondrion. Positions 13–28 (VLRQGRRLLSAAPTQA) match the SIFI-degron motif. Lys-56, Lys-77, and Lys-163 each carry N6-acetyllysine. Residue 266-271 (GSTEVG) participates in NAD(+) binding. The active-site Proton acceptor is the Glu-289. Residue Cys-323 is the Nucleophile of the active site. Lys-372, Lys-379, Lys-387, Lys-430, Lys-432, Lys-445, and Lys-455 each carry N6-acetyllysine.

It belongs to the aldehyde dehydrogenase family. Homotetramer. In response to mitochondrial stress, the precursor protein is ubiquitinated by the SIFI complex in the cytoplasm before mitochondrial import, leading to its degradation. Within the SIFI complex, UBR4 initiates ubiquitin chain that are further elongated or branched by KCMF1.

Its subcellular location is the mitochondrion matrix. It catalyses the reaction an aldehyde + NAD(+) + H2O = a carboxylate + NADH + 2 H(+). It functions in the pathway alcohol metabolism; ethanol degradation; acetate from ethanol: step 2/2. Its function is as follows. Required for clearance of cellular formaldehyde, a cytotoxic and carcinogenic metabolite that induces DNA damage. The polypeptide is Aldehyde dehydrogenase, mitochondrial (ALDH2) (Sus scrofa (Pig)).